The following is a 270-amino-acid chain: Glutamate 5-kinase (270 aa).

Residue K17 participates in ATP binding. Residues S57, D144, and N160 each contribute to the substrate site. Residues 180–181 and 222–228 each bind ATP; these read SD and TGGMTSK.

Belongs to the glutamate 5-kinase family.

It localises to the cytoplasm. It catalyses the reaction L-glutamate + ATP = L-glutamyl 5-phosphate + ADP. It participates in amino-acid biosynthesis; L-proline biosynthesis; L-glutamate 5-semialdehyde from L-glutamate: step 1/2. In terms of biological role, catalyzes the transfer of a phosphate group to glutamate to form L-glutamate 5-phosphate. This Lactococcus lactis subsp. cremoris (strain SK11) protein is Glutamate 5-kinase.